The following is a 450-amino-acid chain: 23S rRNA (uracil(1939)-C(5))-methyltransferase RlmD (450 aa).

A TRAM domain is found at 12-70 (SKQLSAKLSLNVDQLDHLGAGIAQYQGKVVFIPGALPDETVTVQLTEQKKNYARAKLIK). Residues Cys83, Cys89, Cys92, and Cys171 each coordinate [4Fe-4S] cluster. The S-adenosyl-L-methionine site is built by Gln283, Phe312, Asn317, Glu333, Asp360, and Asp380. Cys406 functions as the Nucleophile in the catalytic mechanism.

It belongs to the class I-like SAM-binding methyltransferase superfamily. RNA M5U methyltransferase family. RlmD subfamily.

It carries out the reaction uridine(1939) in 23S rRNA + S-adenosyl-L-methionine = 5-methyluridine(1939) in 23S rRNA + S-adenosyl-L-homocysteine + H(+). Functionally, catalyzes the formation of 5-methyl-uridine at position 1939 (m5U1939) in 23S rRNA. This Shewanella putrefaciens (strain CN-32 / ATCC BAA-453) protein is 23S rRNA (uracil(1939)-C(5))-methyltransferase RlmD.